We begin with the raw amino-acid sequence, 224 residues long: uncharacterized protein (224 aa).

6 helical membrane passes run 25–45, 54–74, 91–111, 119–139, 142–162, and 174–194; these read MMLA…IPFF, ISVV…SLTI, IGVL…RLYF, FCWI…LTTL, ILIT…NFLI, and HFFF…YSFF.

The protein localises to the cell membrane. This is an uncharacterized protein from Mycoplasma genitalium (strain ATCC 33530 / DSM 19775 / NCTC 10195 / G37) (Mycoplasmoides genitalium).